The sequence spans 119 residues: Probable cyclase otaY (119 aa).

Belongs to the aurE cyclase family.

The protein operates within mycotoxin biosynthesis. Probable cyclase; part of the gene cluster that mediates the biosynthesis of ochratoxin A (OTA), a mycotoxin composed of a chlorinated type I polyketide dihydroisocoumarin moiety linked to L-phenylalanine, and demonstrated to have nephrotoxic, immunotoxic, genotoxic, neurotoxic, and teratogenic properties. OtaY is probably involved in the polyketide cyclization. The pathway begins with the highly reducing polyketide synthase otaA that catalyzes the formation of the isocoumarin group during the initial stages of biosynthesis, starting from one acetate and 4 malonate units, to originate the characteristic pentaketide skeleton 7-methylmellein (7-MM) of the OTA molecule. The newly identified cyclase otaY might be involved in the polyketide cyclization reaction during the initial steps of the OTA biosynthesis. 7-MM is then oxidized into 7-carboxymellein (also called ochratoxin beta) by the cytochrome P450 monooxygenase otaC. The NRPS encoded by the otaB gene is involved in the linking of phenylalanine to the dihydroisocoumarin ring. The reaction catalyzed by NRPS results in the production of ochratoxin B (OTB), which is the non-chlorinated analog of OTA and which subsequently serves as the substrate of the halogenase otaD for chlorination activity to form the final molecular structure of OTA, containing a chlorine atom in the C-5 position of the molecule. The protein is Probable cyclase otaY of Aspergillus niger (strain ATCC MYA-4892 / CBS 513.88 / FGSC A1513).